The sequence spans 126 residues: Interleukin-18-binding protein (126 aa).

A signal peptide spans 1 to 16; sequence MRILFLIAFMYGCVHS.

This sequence belongs to the orthopoxvirus OPG022 family.

It is found in the secreted. Its function is as follows. Soluble IL18-binding protein that may modulate the host antiviral response. The protein is Interleukin-18-binding protein (OPG022) of Cynomys gunnisoni (Gunnison's prairie dog).